The sequence spans 96 residues: Aspartyl/glutamyl-tRNA(Asn/Gln) amidotransferase subunit C (96 aa).

The protein belongs to the GatC family. As to quaternary structure, heterotrimer of A, B and C subunits.

It carries out the reaction L-glutamyl-tRNA(Gln) + L-glutamine + ATP + H2O = L-glutaminyl-tRNA(Gln) + L-glutamate + ADP + phosphate + H(+). The enzyme catalyses L-aspartyl-tRNA(Asn) + L-glutamine + ATP + H2O = L-asparaginyl-tRNA(Asn) + L-glutamate + ADP + phosphate + 2 H(+). In terms of biological role, allows the formation of correctly charged Asn-tRNA(Asn) or Gln-tRNA(Gln) through the transamidation of misacylated Asp-tRNA(Asn) or Glu-tRNA(Gln) in organisms which lack either or both of asparaginyl-tRNA or glutaminyl-tRNA synthetases. The reaction takes place in the presence of glutamine and ATP through an activated phospho-Asp-tRNA(Asn) or phospho-Glu-tRNA(Gln). This chain is Aspartyl/glutamyl-tRNA(Asn/Gln) amidotransferase subunit C, found in Chloroflexus aggregans (strain MD-66 / DSM 9485).